Consider the following 201-residue polypeptide: E3 ubiquitin-protein ligase MIR1 (201 aa).

The RING-CH-type zinc finger occupies 1–58; sequence MDSTGEFCWICHQPEGPLKRFCGCKGSCAVSHQDCLRGWLETSRRQTCALCGTPYSMK. Residues 1-81 are Cytoplasmic-facing; the sequence is MDSTGEFCWI…EEVLAAMEAC (81 aa). Zn(2+)-binding residues include Cys-8, Cys-11, Cys-22, Cys-24, His-32, Cys-35, Cys-48, and Cys-51. Positions 52–79 are DIRT; sequence GTPYSMKWKTKPLREWTWGEEEVLAAME. The helical transmembrane segment at 82 to 102 threads the bilayer; that stretch reads LPLVLIPLAVLMIVMGTWLLV. Topologically, residues 103–113 are extracellular; it reads NHNGFLSPRMQ. The helical transmembrane segment at 114–134 threads the bilayer; that stretch reads VVLVVIVLLAMIVFSASASYV. At 135–201 the chain is on the cytoplasmic side; that stretch reads MVEGPGCLDT…RLGCVRLCCV (67 aa).

Interacts with host UBE2J2.

Its subcellular location is the host endoplasmic reticulum membrane. It carries out the reaction [E2 ubiquitin-conjugating enzyme]-S-ubiquitinyl-L-cysteine + [acceptor protein]-L-cysteine = [E2 ubiquitin-conjugating enzyme]-L-cysteine + [acceptor protein]-S-ubiquitinyl-L-cysteine.. It participates in protein modification; protein ubiquitination. Functionally, E3 ubiquitin-protein ligase that mediates ubiquitination of host surface class I (MHC-I) H-2D(b)/H2-D1 and H-2K(b)/H2-K1 molecules before they exit the endoplasmic reticulum, leading to their degradation by the endoplasmic reticulum-associated degradation (ERAD) system, thus blocking the immune detection of virus-infected cells. Mediates ubiquitination of lysine, as well as serine and threonine residues present in the cytoplasmic tail of surface class I molecules. Promotes ubiquitination of hydroxylated serine or threonine residues via ester bonds instead of the classical isopeptide linkage. The protein is E3 ubiquitin-protein ligase MIR1 (K3) of Murid herpesvirus 4 (MuHV-4).